The chain runs to 94 residues: Co-chaperonin GroES (94 aa).

It belongs to the GroES chaperonin family. As to quaternary structure, heptamer of 7 subunits arranged in a ring. Interacts with the chaperonin GroEL.

It is found in the cytoplasm. Its function is as follows. Together with the chaperonin GroEL, plays an essential role in assisting protein folding. The GroEL-GroES system forms a nano-cage that allows encapsulation of the non-native substrate proteins and provides a physical environment optimized to promote and accelerate protein folding. GroES binds to the apical surface of the GroEL ring, thereby capping the opening of the GroEL channel. This chain is Co-chaperonin GroES, found in Alkaliphilus oremlandii (strain OhILAs) (Clostridium oremlandii (strain OhILAs)).